A 1519-amino-acid polypeptide reads, in one-letter code: Putative lipoprotein YghJ (1519 aa).

A signal peptide spans 1-23 (MNKKFKYKKSLLAAILSATLLAG). 2 disordered regions span residues 22–107 (AGCD…GATC) and 226–247 (NAAT…TTPG). A lipid anchor (N-palmitoyl cysteine) is attached at Cys24. A lipid anchor (S-diacylglycerol cysteine) is attached at Cys24. The span at 31-42 (SSSDTPPVDSGT) shows a compositional bias: low complexity. Residues 51-77 (DPTPNPEPTPEPTPDPEPTPEPIPDPE) show a composition bias toward pro residues. The span at 97–107 (GGSQRVTGATC) shows a compositional bias: polar residues. Residues 234 to 247 (STHTSPVVPVTTPG) are compositionally biased toward low complexity. A Peptidase M60 domain is found at 1080-1380 (GNMQSTGLWA…MYAQLKEWAE (301 aa)). Residues 1497-1519 (DLPKPEQGPETINQVTEHKMSAE) are disordered.

To V.cholerae AcfD (VC_0845).

It is found in the cell membrane. Its function is as follows. May be a substrate of the type II secretion system beta (T2SS-beta). This chain is Putative lipoprotein YghJ (yghJ), found in Escherichia coli O78:H11 (strain H10407 / ETEC).